Reading from the N-terminus, the 175-residue chain is Thioredoxin-like protein CITRX, chloroplastic (175 aa).

Residues 1 to 64 (MQAASLAFHP…KPPAVGKYVR (64 aa)) constitute a chloroplast transit peptide. One can recognise a Thioredoxin domain in the interval 74–175 (AKEIQELIKG…MMRDIIDNDL (102 aa)). Residues Cys-98 and Cys-101 each act as nucleophile in the active site. A disulfide bridge connects residues Cys-98 and Cys-101.

It belongs to the thioredoxin family. Plant CITRX-type subfamily. As to quaternary structure, interacts with Cf-9 resistance protein.

The protein resides in the plastid. It localises to the chloroplast. Functionally, probable thiol-disulfide oxidoreductase that may play a role in proper chloroplast development. The polypeptide is Thioredoxin-like protein CITRX, chloroplastic (Solanum lycopersicum (Tomato)).